A 201-amino-acid polypeptide reads, in one-letter code: NADH-quinone oxidoreductase subunit C (201 aa).

This sequence belongs to the complex I 30 kDa subunit family. NDH-1 is composed of 14 different subunits. Subunits NuoB, C, D, E, F, and G constitute the peripheral sector of the complex.

It is found in the cell inner membrane. The enzyme catalyses a quinone + NADH + 5 H(+)(in) = a quinol + NAD(+) + 4 H(+)(out). Its function is as follows. NDH-1 shuttles electrons from NADH, via FMN and iron-sulfur (Fe-S) centers, to quinones in the respiratory chain. The immediate electron acceptor for the enzyme in this species is believed to be ubiquinone. Couples the redox reaction to proton translocation (for every two electrons transferred, four hydrogen ions are translocated across the cytoplasmic membrane), and thus conserves the redox energy in a proton gradient. The sequence is that of NADH-quinone oxidoreductase subunit C from Ruegeria sp. (strain TM1040) (Silicibacter sp.).